Reading from the N-terminus, the 63-residue chain is uncharacterized protein (63 aa).

Residues 1 to 18 (MLNSEHFNLIQRALDATA) form the signal peptide.

This is an uncharacterized protein from Bacillus subtilis (strain 168).